The chain runs to 88 residues: MKTLLLTLVVVTIVCLDLGNSFSCYKTPYVKSEPCAPGENLCYTKSWCDAFCSIRGKVIELGCAATCPPAEPKKDITCCSTDNCNTHP.

An N-terminal signal peptide occupies residues 1–21 (MKTLLLTLVVVTIVCLDLGNS). Disulfide bonds link cysteine 24–cysteine 42, cysteine 35–cysteine 63, cysteine 48–cysteine 52, cysteine 67–cysteine 78, and cysteine 79–cysteine 84.

The protein belongs to the three-finger toxin family. Long-chain subfamily. Type II alpha-neurotoxin sub-subfamily. In terms of tissue distribution, expressed by the venom gland.

Its subcellular location is the secreted. Functionally, binds with high affinity to muscular (alpha-1/CHRNA1) and neuronal (alpha-7/CHRNA7) nicotinic acetylcholine receptor (nAChR) and inhibits acetylcholine from binding to the receptor, thereby impairing neuromuscular and neuronal transmission. This chain is Long neurotoxin 31, found in Drysdalia coronoides (White-lipped snake).